Consider the following 148-residue polypeptide: Large ribosomal subunit protein bL9 (148 aa).

It belongs to the bacterial ribosomal protein bL9 family.

Binds to the 23S rRNA. This Acetivibrio thermocellus (strain ATCC 27405 / DSM 1237 / JCM 9322 / NBRC 103400 / NCIMB 10682 / NRRL B-4536 / VPI 7372) (Clostridium thermocellum) protein is Large ribosomal subunit protein bL9.